Reading from the N-terminus, the 68-residue chain is Large ribosomal subunit protein uL30 (68 aa).

Belongs to the universal ribosomal protein uL30 family. Part of the 50S ribosomal subunit.

The polypeptide is Large ribosomal subunit protein uL30 (Pseudarthrobacter chlorophenolicus (strain ATCC 700700 / DSM 12829 / CIP 107037 / JCM 12360 / KCTC 9906 / NCIMB 13794 / A6) (Arthrobacter chlorophenolicus)).